Reading from the N-terminus, the 382-residue chain is Apolipoprotein A-IV (382 aa).

An N-terminal signal peptide occupies residues 1–20; it reads MFLKAVVLTLSLVAVTGAQA. 13 tandem repeats follow at residues 33 to 54, 60 to 81, 82 to 103, 115 to 136, 137 to 158, 159 to 180, 181 to 202, 203 to 224, 225 to 246, 247 to 268, 269 to 286, 287 to 308, and 309 to 330. The 13 X 22 AA approximate tandem repeats stretch occupies residues 33–330; it reads DYFSQLSNNA…QVEELRQKLG (298 aa).

This sequence belongs to the apolipoprotein A1/A4/E family. As to quaternary structure, homodimer. Post-translationally, phosphorylation sites are present in the extracellular medium.

The protein resides in the secreted. In terms of biological role, may have a role in chylomicrons and VLDL secretion and catabolism. Required for efficient activation of lipoprotein lipase by ApoC-II; potent activator of LCAT. Apoa-IV is a major component of HDL and chylomicrons. This chain is Apolipoprotein A-IV (APOA4), found in Mirounga angustirostris (Northern elephant seal).